Reading from the N-terminus, the 435-residue chain is MQTNVENLGALERRLNVSVPQEKIETEVESRLKRLARTAKFHGFRPGKVPLKIVAQQYGPQVRQEVMEDVLKKNFSEAVRENNLRVAGYPRFEPKLAESDTAQVEFSATFEVYPDITLGDLGGAHIERPVVEVTPADVDKTLEVLRKQRVEFEPVDRPAQAGDRINIDYRGLIDGAEFAGGKAENFSLVLGEGRLLKDFEEPLLGMSPGQSKTFEVAFPSDYHGKEVAGKTAVFEVKLSGVESSKLPEVNADFATSLGIAEGDVEKMRSEIRANLEREAAKRVNARLKEQVMQVLIDTTSNIDPPKALVEMELDRLMEDARNDFASRGLDTKNFSLPHDMLQERAQHRVKLGLILGELVKMHNLHPKPEQVRAVVEDLAQAYENPAEVVSWHYAAPERLREAESAALEDNVVTWVLEKAVVTGKPMPLDELMGRS.

Residues 162–247 (GDRINIDYRG…LSGVESSKLP (86 aa)) enclose the PPIase FKBP-type domain.

This sequence belongs to the FKBP-type PPIase family. Tig subfamily.

The protein localises to the cytoplasm. It catalyses the reaction [protein]-peptidylproline (omega=180) = [protein]-peptidylproline (omega=0). In terms of biological role, involved in protein export. Acts as a chaperone by maintaining the newly synthesized protein in an open conformation. Functions as a peptidyl-prolyl cis-trans isomerase. The protein is Trigger factor of Nitrosospira multiformis (strain ATCC 25196 / NCIMB 11849 / C 71).